A 434-amino-acid polypeptide reads, in one-letter code: Eukaryotic translation initiation factor 3 subunit E (434 aa).

The PCI domain maps to 219–392 (FFNHPKGRDL…GHVVMGTQPL (174 aa)).

It belongs to the eIF-3 subunit E family. As to quaternary structure, component of the eukaryotic translation initiation factor 3 (eIF-3) complex. The eIF-3 complex interacts with pix. Interacts with mxt.

The protein resides in the cytoplasm. Its function is as follows. Component of the eukaryotic translation initiation factor 3 (eIF-3) complex, which is involved in protein synthesis of a specialized repertoire of mRNAs and, together with other initiation factors, stimulates binding of mRNA and methionyl-tRNAi to the 40S ribosome. The eIF-3 complex specifically targets and initiates translation of a subset of mRNAs involved in cell proliferation. The protein is Eukaryotic translation initiation factor 3 subunit E (eIF3-S6) of Drosophila pseudoobscura pseudoobscura (Fruit fly).